The following is a 466-amino-acid chain: tRNA(Ile)-lysidine synthase (466 aa).

42–47 (SGGVDS) lines the ATP pocket.

The protein belongs to the tRNA(Ile)-lysidine synthase family.

It localises to the cytoplasm. The catalysed reaction is cytidine(34) in tRNA(Ile2) + L-lysine + ATP = lysidine(34) in tRNA(Ile2) + AMP + diphosphate + H(+). Ligates lysine onto the cytidine present at position 34 of the AUA codon-specific tRNA(Ile) that contains the anticodon CAU, in an ATP-dependent manner. Cytidine is converted to lysidine, thus changing the amino acid specificity of the tRNA from methionine to isoleucine. The protein is tRNA(Ile)-lysidine synthase of Anaplasma marginale (strain St. Maries).